Here is a 159-residue protein sequence, read N- to C-terminus: Transcriptional repressor NrdR (159 aa).

A zinc finger spans residues 3–34 (CPFCGAEDTSVVDSRISEEGARIRRRRRCVEC). Residues 49 to 139 (PQVIKQDGNR…VYRSFEDVGD (91 aa)) form the ATP-cone domain.

This sequence belongs to the NrdR family. Zn(2+) is required as a cofactor.

Functionally, negatively regulates transcription of bacterial ribonucleotide reductase nrd genes and operons by binding to NrdR-boxes. The polypeptide is Transcriptional repressor NrdR (Nitrosomonas europaea (strain ATCC 19718 / CIP 103999 / KCTC 2705 / NBRC 14298)).